Consider the following 101-residue polypeptide: UPF0235 protein SG2030 (101 aa).

It belongs to the UPF0235 family.

This chain is UPF0235 protein SG2030, found in Sodalis glossinidius (strain morsitans).